The sequence spans 308 residues: tRNA dimethylallyltransferase (308 aa).

Residue 10-17 (GPTGVGKT) participates in ATP binding. 12-17 (TGVGKT) is a binding site for substrate. The segment at 35–38 (DSRQ) is interaction with substrate tRNA.

The protein belongs to the IPP transferase family. Monomer. Mg(2+) is required as a cofactor.

It catalyses the reaction adenosine(37) in tRNA + dimethylallyl diphosphate = N(6)-dimethylallyladenosine(37) in tRNA + diphosphate. Catalyzes the transfer of a dimethylallyl group onto the adenine at position 37 in tRNAs that read codons beginning with uridine, leading to the formation of N6-(dimethylallyl)adenosine (i(6)A). This chain is tRNA dimethylallyltransferase, found in Fervidobacterium nodosum (strain ATCC 35602 / DSM 5306 / Rt17-B1).